The sequence spans 787 residues: ABC transporter G family member 5 (787 aa).

The span at 1 to 17 (MSRFVDKLPLFDRRPSP) shows a compositional bias: basic and acidic residues. 2 disordered regions span residues 1–25 (MSRFVDKLPLFDRRPSPMEEAEGLP) and 71–116 (NDAR…EGQP). Polar residues predominate over residues 74-85 (RSGSSTPISSPR). The region spanning 121–382 (LKFTDLTYSV…FLDFGKPIPD (262 aa)) is the ABC transporter domain. 175–182 (GASGSGKS) contributes to the ATP binding site. The ABC transmembrane type-2 domain occupies 484–691 (GVLTRRAFIN…PYEAVMQNEF (208 aa)). The next 8 membrane-spanning stretches (helical) occupy residues 500 to 520 (VFIIRLAAVLVTGFILATIFW), 535 to 555 (FFAIAMSTMYYTCSDALPVFL), 576 to 596 (VLSHTIVGFPSLVVLSFAFAL), 599 to 619 (FFSVGLAGGVNGFFYFVAIVL), 620 to 640 (ASFWAGSGFATFLSGVVTHVM), 641 to 661 (LGFPVVLSTLAYFLLFSGFFI), 728 to 745 (SLGVNIGTGTCITTGPDF), and 760 to 780 (LWITVAWGFLFRILFYISLLL).

This sequence belongs to the ABC transporter superfamily. ABCG family. Eye pigment precursor importer (TC 3.A.1.204) subfamily. As to expression, expressed in the crown root primordia, endodermis, pericycle and stele in the root, in leaf primordia of main and axillary shoots, and in the vascular cells and leaf epidermis of older leaves.

The protein resides in the cell membrane. Functionally, essential transporter for growth and development under abiotic stress. Mediates shoot branching by promoting the outgrowth of lateral shoots. Required for salt tolerance via Na/K homeostasis, at least partly by regulating SKC1/OsHKT1;5. Necessary for hypodermal suberization of roots, which contributes to formation of the apoplastic barrier. The chain is ABC transporter G family member 5 from Oryza sativa subsp. japonica (Rice).